A 45-amino-acid chain; its full sequence is Mu-conotoxin-like Cal 12.1.2d (45 aa).

Disulfide bonds link Cys3-Cys16, Cys11-Cys28, Cys18-Cys33, and Cys27-Cys39. At Trp17 the chain carries 6'-bromotryptophan. The residue at position 23 (Pro23) is a 4-hydroxyproline. Residues Trp37 and Trp38 each carry the 6'-bromotryptophan modification. Residue Pro40 is modified to 4-hydroxyproline.

As to expression, expressed by the venom duct.

The protein resides in the secreted. Mu-conotoxins block voltage-gated sodium channels. This toxin reversibly blocks voltage-gated sodium channel in cephalopods, with no alteration in the voltage dependence of sodium conductance or on the kinetics of inactivation. The chain is Mu-conotoxin-like Cal 12.1.2d from Californiconus californicus (California cone).